The following is an 822-amino-acid chain: Pentatricopeptide repeat-containing protein At2g41720 (822 aa).

Residues 1-28 (MATVTNFKLVTPPESSRADKPGATKASD) form a disordered region. PPR repeat units lie at residues 106–136 (ARKN…MKIQ), 142–176 (RNDI…SCKP), 177–211 (DAET…AIAP), 212–246 (SRST…GVGP), 247–281 (DLVT…KVRP), 282–316 (DTTT…RAEC), 319–353 (DVVT…GLKP), 354–388 (NIVS…GIIP), 389–423 (DVVS…RRKP), 424–458 (NVVT…GIKP), 459–493 (NVVS…GINL), 494–528 (NTAA…KVKA), 529–563 (DSVT…SIPL), 564–598 (TKEV…GCEP), 599–633 (DVIA…GIEP), 634–668 (DSIA…EIPF), 669–699 (TGAV…MDPY), 704–738 (SIGL…GVGI), and 739–773 (NLKT…GIQP).

It belongs to the PPR family. P subfamily.

The sequence is that of Pentatricopeptide repeat-containing protein At2g41720 (EMB2654) from Arabidopsis thaliana (Mouse-ear cress).